The chain runs to 94 residues: Integration host factor subunit beta (94 aa).

This sequence belongs to the bacterial histone-like protein family. Heterodimer of an alpha and a beta chain.

Functionally, this protein is one of the two subunits of integration host factor, a specific DNA-binding protein that functions in genetic recombination as well as in transcriptional and translational control. In Buchnera aphidicola subsp. Acyrthosiphon pisum (strain 5A), this protein is Integration host factor subunit beta.